A 407-amino-acid chain; its full sequence is Na(+)-translocating NADH-quinone reductase subunit F (407 aa).

A helical membrane pass occupies residues 3-23 (ITLGIAMFTVIVLALAVLILF). One can recognise a 2Fe-2S ferredoxin-type domain in the interval 32 to 126 (GDITIEINDD…SMKIELPEEV (95 aa)). The [2Fe-2S] cluster site is built by C69, C75, C78, and C110. Residues 129–269 (VKKWECTVIS…SGPFGEFFAK (141 aa)) enclose the FAD-binding FR-type domain.

The protein belongs to the NqrF family. In terms of assembly, composed of six subunits; NqrA, NqrB, NqrC, NqrD, NqrE and NqrF. Requires [2Fe-2S] cluster as cofactor. FAD is required as a cofactor.

The protein resides in the cell inner membrane. It carries out the reaction a ubiquinone + n Na(+)(in) + NADH + H(+) = a ubiquinol + n Na(+)(out) + NAD(+). NQR complex catalyzes the reduction of ubiquinone-1 to ubiquinol by two successive reactions, coupled with the transport of Na(+) ions from the cytoplasm to the periplasm. The first step is catalyzed by NqrF, which accepts electrons from NADH and reduces ubiquinone-1 to ubisemiquinone by a one-electron transfer pathway. This chain is Na(+)-translocating NADH-quinone reductase subunit F, found in Histophilus somni (strain 129Pt) (Haemophilus somnus).